The primary structure comprises 426 residues: Histidine--tRNA ligase (426 aa).

This sequence belongs to the class-II aminoacyl-tRNA synthetase family.

Its subcellular location is the cytoplasm. The catalysed reaction is tRNA(His) + L-histidine + ATP = L-histidyl-tRNA(His) + AMP + diphosphate + H(+). The polypeptide is Histidine--tRNA ligase (hisS) (Thermoplasma volcanium (strain ATCC 51530 / DSM 4299 / JCM 9571 / NBRC 15438 / GSS1)).